Consider the following 231-residue polypeptide: NADH-ubiquinone oxidoreductase chain 4 (231 aa).

The next 7 membrane-spanning stretches (helical) occupy residues 1 to 21 (PIAG…YGII), 34 to 54 (LFIP…LTCL), 61 to 80 (SLIA…AVII), 84 to 106 (WGLS…LFCL), 118 to 138 (ILIL…WWLL), 156 to 176 (LLIV…LGLS), and 211 to 231 (LLMI…ELVI).

It belongs to the complex I subunit 4 family.

It is found in the mitochondrion membrane. The enzyme catalyses a ubiquinone + NADH + 5 H(+)(in) = a ubiquinol + NAD(+) + 4 H(+)(out). Its function is as follows. Core subunit of the mitochondrial membrane respiratory chain NADH dehydrogenase (Complex I) that is believed to belong to the minimal assembly required for catalysis. Complex I functions in the transfer of electrons from NADH to the respiratory chain. The immediate electron acceptor for the enzyme is believed to be ubiquinone. This chain is NADH-ubiquinone oxidoreductase chain 4 (MT-ND4), found in Hypnale hypnale (Merrem's hump-nosed viper).